The following is a 142-amino-acid chain: MIHMKQLTSKEEWAESYPIMSELRTELDIETYLQRLEACVQKESYMLFALYENTAIRALCGALPRVSIHKGEHLWIADLVTTAPCRSKGYGKMLLDYASDWARKAGLGFVSLSSGLQRKDAHRFYTDKMGFTIESYLFRKPV.

The region spanning 2-142 is the N-acetyltransferase domain; that stretch reads IHMKQLTSKE…IESYLFRKPV (141 aa).

It belongs to the acetyltransferase family.

This is an uncharacterized protein from Bacillus subtilis (strain 168).